Reading from the N-terminus, the 92-residue chain is Auxin-responsive protein SAUR28 (92 aa).

This sequence belongs to the ARG7 family. In terms of tissue distribution, higher expression in thermo-responsive cultivars (e.g. cv. Alst-1, cv. Ang-0 and cv. Com-0) than in low thermo-responsive cultivars (e.g. cv. Dja-1, cv. El-0 and cv. Kon).

Its subcellular location is the cell membrane. Functionally, functions as a positive effector of cell expansion through modulation of auxin transport. Involved in thermo-responsiveness of plant architecture. Enhances plasma membrane H(+)-ATPase. In Arabidopsis thaliana (Mouse-ear cress), this protein is Auxin-responsive protein SAUR28.